A 274-amino-acid chain; its full sequence is NH(3)-dependent NAD(+) synthetase (274 aa).

Residue 46 to 53 coordinates ATP; sequence GISGGQDS. Mg(2+) is bound at residue Asp52. Arg140 provides a ligand contact to deamido-NAD(+). An ATP-binding site is contributed by Thr160. Residue Glu165 participates in Mg(2+) binding. Deamido-NAD(+) contacts are provided by Lys173 and Asp180. ATP contacts are provided by Lys189 and Thr211. 260–261 serves as a coordination point for deamido-NAD(+); the sequence is HK.

It belongs to the NAD synthetase family. Homodimer.

The catalysed reaction is deamido-NAD(+) + NH4(+) + ATP = AMP + diphosphate + NAD(+) + H(+). It functions in the pathway cofactor biosynthesis; NAD(+) biosynthesis; NAD(+) from deamido-NAD(+) (ammonia route): step 1/1. Functionally, catalyzes the ATP-dependent amidation of deamido-NAD to form NAD. Uses ammonia as a nitrogen source. The protein is NH(3)-dependent NAD(+) synthetase of Streptococcus pneumoniae serotype 2 (strain D39 / NCTC 7466).